The primary structure comprises 660 residues: DNA ligase (660 aa).

Residues 32-36 (DEVYD), 81-82 (SM), and E112 each bind NAD(+). Residue K114 is the N6-AMP-lysine intermediate of the active site. The NAD(+) site is built by R135, E169, K284, and K308. Zn(2+)-binding residues include C402, C405, C418, and C423. The region spanning 578–660 (VENSPLAHKT…ELLKEAGIEA (83 aa)) is the BRCT domain.

It belongs to the NAD-dependent DNA ligase family. LigA subfamily. Mg(2+) is required as a cofactor. Requires Mn(2+) as cofactor.

It carries out the reaction NAD(+) + (deoxyribonucleotide)n-3'-hydroxyl + 5'-phospho-(deoxyribonucleotide)m = (deoxyribonucleotide)n+m + AMP + beta-nicotinamide D-nucleotide.. Its function is as follows. DNA ligase that catalyzes the formation of phosphodiester linkages between 5'-phosphoryl and 3'-hydroxyl groups in double-stranded DNA using NAD as a coenzyme and as the energy source for the reaction. It is essential for DNA replication and repair of damaged DNA. This is DNA ligase from Nitratiruptor sp. (strain SB155-2).